The sequence spans 369 residues: Anhydro-N-acetylmuramic acid kinase (369 aa).

12-19 (GTSMDGVD) provides a ligand contact to ATP.

Belongs to the anhydro-N-acetylmuramic acid kinase family.

It carries out the reaction 1,6-anhydro-N-acetyl-beta-muramate + ATP + H2O = N-acetyl-D-muramate 6-phosphate + ADP + H(+). The protein operates within amino-sugar metabolism; 1,6-anhydro-N-acetylmuramate degradation. It functions in the pathway cell wall biogenesis; peptidoglycan recycling. Functionally, catalyzes the specific phosphorylation of 1,6-anhydro-N-acetylmuramic acid (anhMurNAc) with the simultaneous cleavage of the 1,6-anhydro ring, generating MurNAc-6-P. Is required for the utilization of anhMurNAc either imported from the medium or derived from its own cell wall murein, and thus plays a role in cell wall recycling. The sequence is that of Anhydro-N-acetylmuramic acid kinase from Shewanella pealeana (strain ATCC 700345 / ANG-SQ1).